Reading from the N-terminus, the 1271-residue chain is Zinc finger transcription factor Trps1 (1271 aa).

Disordered stretches follow at residues 1–76 (MVRK…DSAS) and 124–155 (SPIKSEADDTQELASSASVDSLEAKEENDMSP). The span at 34–49 (SKEISTDPMQENSEQS) shows a compositional bias: polar residues. Positions 54 to 65 (HNSDDHSFHDQE) are enriched in basic and acidic residues. Polar residues predominate over residues 66-76 (PSSSINKDSAS). Residues 217–242 (FKCNICGYGYYGNDPTDLIKHFRKYH) form a C2H2-type 1; atypical zinc finger. The C2H2-type 2; atypical zinc-finger motif lies at 328–353 (FRCKFCNFTYLAKSATELEQHFLKTH). Positions 353–387 (HPNKMKMSSDSGKPSEKSTNKSSPIPRSCEPGDLG) are disordered. Residues 426–451 (YWCKFCSFSCESSSNSKLLEHHSKQH) form a C2H2-type 3; atypical zinc finger. The C2H2-type 4; atypical zinc-finger motif lies at 513-543 (YNCQFCDFRYSKSHGPEVILVGPLLRHYQQH). 3 C2H2-type zinc fingers span residues 604 to 627 (HQCDQCSFSSPDVDVLLLHYENAH), 656 to 679 (HSCTKCDFIVQVEEDLPRHYRRVH), and 682 to 705 (YKCRQCNFTAADTQSLLDHFNSAH). Residues 843–877 (GVTAGASGEKSGQHTPQYPTAGDSKSKDESQSLLR) form a disordered region. Residues 886 to 910 (CANCLTTKTSLWRKNANGGYVCNAC) form a GATA-type zinc finger. Disordered stretches follow at residues 938 to 987 (RTRK…RENQ), 1031 to 1064 (SPQESSGEPGNSSSVSDGKGSSERGSPIEKYMRP), and 1154 to 1196 (LDLA…EKSD). The span at 972 to 985 (IRSEDHSMEGHQRE) shows a compositional bias: basic and acidic residues. Residues 1031 to 1049 (SPQESSGEPGNSSSVSDGK) are compositionally biased toward low complexity. 2 stretches are compositionally biased toward basic and acidic residues: residues 1050 to 1062 (GSSERGSPIEKYM) and 1170 to 1196 (DSKEKSKSPVSVKDDGPLNVTKIEKSD). Residues 1153 to 1271 (PLDLAMKHSR…QAEKNGKNKD (119 aa)) are transcriptional repressor domain. Residues Lys1182 and Lys1191 each participate in a glycyl lysine isopeptide (Lys-Gly) (interchain with G-Cter in SUMO) cross-link. 2 C2H2-type zinc fingers span residues 1205 to 1227 (TKCVHCGIVFLDEVMYALHMSCH) and 1233 to 1257 (FQCSICQHLCTDKYDFTTHIQRGLH).

In terms of assembly, binds specifically to GATA sequences. Post-translationally, sumoylated. Sumoylation in the repressor domain inhibits the transcription repression activity. Sumoylation on Lys-1191 is the major site. Appears to be sumoylated on multiple sites.

The protein localises to the nucleus. In terms of biological role, transcriptional repressor. Represses expression of GATA-regulated genes at selected sites and stages in vertebrate development. This chain is Zinc finger transcription factor Trps1 (trps1), found in Xenopus laevis (African clawed frog).